The sequence spans 545 residues: Glucose-6-phosphate isomerase (545 aa).

The Proton donor role is filled by Glu353. Catalysis depends on residues His384 and Lys510.

The protein belongs to the GPI family.

Its subcellular location is the cytoplasm. It catalyses the reaction alpha-D-glucose 6-phosphate = beta-D-fructose 6-phosphate. The protein operates within carbohydrate biosynthesis; gluconeogenesis. It participates in carbohydrate degradation; glycolysis; D-glyceraldehyde 3-phosphate and glycerone phosphate from D-glucose: step 2/4. Catalyzes the reversible isomerization of glucose-6-phosphate to fructose-6-phosphate. The chain is Glucose-6-phosphate isomerase from Aromatoleum aromaticum (strain DSM 19018 / LMG 30748 / EbN1) (Azoarcus sp. (strain EbN1)).